The primary structure comprises 214 residues: Protein-L-isoaspartate O-methyltransferase (214 aa).

Residue S61 is part of the active site.

The protein belongs to the methyltransferase superfamily. L-isoaspartyl/D-aspartyl protein methyltransferase family.

It is found in the cytoplasm. It carries out the reaction [protein]-L-isoaspartate + S-adenosyl-L-methionine = [protein]-L-isoaspartate alpha-methyl ester + S-adenosyl-L-homocysteine. Its function is as follows. Catalyzes the methyl esterification of L-isoaspartyl residues in peptides and proteins that result from spontaneous decomposition of normal L-aspartyl and L-asparaginyl residues. It plays a role in the repair and/or degradation of damaged proteins. The polypeptide is Protein-L-isoaspartate O-methyltransferase (Paramagnetospirillum magneticum (strain ATCC 700264 / AMB-1) (Magnetospirillum magneticum)).